The chain runs to 475 residues: Sulfate adenylyltransferase subunit 1 (475 aa).

Residues 25 to 239 (KSLLRFLTCG…EVLETVEIQR (215 aa)) form the tr-type G domain. The interval 34–41 (GSVDDGKS) is G1. GTP is bound at residue 34–41 (GSVDDGKS). Positions 92-96 (GITID) are G2. The segment at 113 to 116 (DTPG) is G3. GTP is bound by residues 113-117 (DTPGH) and 168-171 (NKMD). The G4 stretch occupies residues 168 to 171 (NKMD). The segment at 206–208 (SAL) is G5.

Belongs to the TRAFAC class translation factor GTPase superfamily. Classic translation factor GTPase family. CysN/NodQ subfamily. In terms of assembly, heterodimer composed of CysD, the smaller subunit, and CysN.

The catalysed reaction is sulfate + ATP + H(+) = adenosine 5'-phosphosulfate + diphosphate. Its pathway is sulfur metabolism; hydrogen sulfide biosynthesis; sulfite from sulfate: step 1/3. Its function is as follows. With CysD forms the ATP sulfurylase (ATPS) that catalyzes the adenylation of sulfate producing adenosine 5'-phosphosulfate (APS) and diphosphate, the first enzymatic step in sulfur assimilation pathway. APS synthesis involves the formation of a high-energy phosphoric-sulfuric acid anhydride bond driven by GTP hydrolysis by CysN coupled to ATP hydrolysis by CysD. This Escherichia coli O9:H4 (strain HS) protein is Sulfate adenylyltransferase subunit 1.